Consider the following 483-residue polypeptide: Acetyl-coenzyme A carboxylase carboxyl transferase subunit beta, chloroplastic (483 aa).

One can recognise a CoA carboxyltransferase N-terminal domain in the interval 219-483 (LWVQCENCYG…LHTFFPLNQN (265 aa)). Residues cysteine 223, cysteine 226, cysteine 242, and cysteine 245 each contribute to the Zn(2+) site. A C4-type zinc finger spans residues 223–245 (CENCYGLNYKKFFKSKMNLCEQC).

Belongs to the AccD/PCCB family. In terms of assembly, acetyl-CoA carboxylase is a heterohexamer composed of biotin carboxyl carrier protein, biotin carboxylase and 2 subunits each of ACCase subunit alpha and ACCase plastid-coded subunit beta (accD). The cofactor is Zn(2+).

The protein resides in the plastid. It is found in the chloroplast stroma. The catalysed reaction is N(6)-carboxybiotinyl-L-lysyl-[protein] + acetyl-CoA = N(6)-biotinyl-L-lysyl-[protein] + malonyl-CoA. Its pathway is lipid metabolism; malonyl-CoA biosynthesis; malonyl-CoA from acetyl-CoA: step 1/1. In terms of biological role, component of the acetyl coenzyme A carboxylase (ACC) complex. Biotin carboxylase (BC) catalyzes the carboxylation of biotin on its carrier protein (BCCP) and then the CO(2) group is transferred by the transcarboxylase to acetyl-CoA to form malonyl-CoA. The chain is Acetyl-coenzyme A carboxylase carboxyl transferase subunit beta, chloroplastic from Guizotia abyssinica (Niger).